The following is a 642-amino-acid chain: Frizzled and smoothened-like protein B (642 aa).

The first 26 residues, 1 to 26, serve as a signal peptide directing secretion; the sequence is MFNKNNNNNKIIIILKLFLIILIVNN. Topologically, residues 27–264 are extracellular; the sequence is NNNIKTFGLN…KWHQMYNMSK (238 aa). In terms of domain architecture, FZ spans 47–197; it reads DPTATCSNYI…GFFPVPCSDP (151 aa). Cystine bridges form between Cys-52/Cys-123, Cys-65/Cys-116, and Cys-143/Cys-194. 7 N-linked (GlcNAc...) asparagine glycosylation sites follow: Asn-80, Asn-153, Asn-162, Asn-177, Asn-203, Asn-222, and Asn-261. Residues 265–285 form a helical membrane-spanning segment; that stretch reads ILSTISFVCSIYNVLTFGILN. Residues 286 to 294 are Cytoplasmic-facing; that stretch reads HRRSKYNYC. Residues 295–315 traverse the membrane as a helical segment; that stretch reads ITFFSASVIIITMMDIVTYGI. At 316-344 the chain is on the extracellular side; it reads GYEKLLCPEPGRFAVQSDVSCGATGALFH. A helical membrane pass occupies residues 345–365; the sequence is IGITNGVFWWTTMSICLFAVV. The Cytoplasmic segment spans residues 366–375; sequence KRIKLFDFRY. A helical membrane pass occupies residues 376–398; that stretch reads FIIFNTTASLISVIIPLAGNAFM. Residues 399–416 are Extracellular-facing; the sequence is AGTGSLACWIRKTWYVNS. Residues 417–437 form a helical membrane-spanning segment; it reads VFWIPCGIALTIGSVCIILVI. Over 438–460 the chain is Cytoplasmic; that stretch reads YEIYKITKNVSTKDNRMILLQIK. A helical transmembrane segment spans residues 461–481; it reads PFLCVTLVGGSFYYLFIFNFD. Asn-482 carries N-linked (GlcNAc...) asparagine glycosylation. Residues 482 to 514 lie on the Extracellular side of the membrane; sequence NESHSKEYKEKVVDYVMCLLSDTGKECLMAGPN. Residues 515–535 traverse the membrane as a helical segment; that stretch reads YVAYFVFYFFIRLFGITFFCI. Over 536 to 642 the chain is Cytoplasmic; the sequence is YGTSQNARDI…INSASNTSSD (107 aa). Residues 578 to 642 are disordered; it reads GTNPTSNSKN…INSASNTSSD (65 aa). The span at 583–598 shows a compositional bias: low complexity; that stretch reads SNSKNSKNNQNNQNNN. Positions 584–611 form a coiled coil; it reads NSKNSKNNQNNQNNNSRKEFESKNIELE. The span at 599–609 shows a compositional bias: basic and acidic residues; it reads SRKEFESKNIE. 2 stretches are compositionally biased toward polar residues: residues 614–623 and 632–642; these read ESISKGQTTR and NINSASNTSSD.

This sequence belongs to the G-protein coupled receptor Fz/Smo family.

The protein resides in the membrane. The sequence is that of Frizzled and smoothened-like protein B (fslB) from Dictyostelium discoideum (Social amoeba).